A 305-amino-acid polypeptide reads, in one-letter code: MSTPSPAAAPSREEWLAKARTLSEALPFMRRYAGRTVVVKYGGHAMGDESLGRRFANDIVLMKQMGISPVVVHGGGPQIGQMLERLKIKSEFVDGLRVTDKETVEIAEMVLSGSINKQIVALINDAGGDAVGLSGKDDDLIEARKVTRSKRDPDSNIEKVIDLGFVGDPFRVNPGLLHKLQQADIIPVIAPIGIGEDGQTYNINADTAAGAIAAAVNATRLLLLTDVAGVLDKQKRLIPEMSVEAAQRAIDDGTATGGMIPKIETCLRAVNGGVEAAVILDGRVPHAIVLELFTEGGAGTLIGRK.

Substrate is bound by residues 75–76 (GG), Arg97, and Asn202.

This sequence belongs to the acetylglutamate kinase family. ArgB subfamily.

The protein localises to the cytoplasm. The catalysed reaction is N-acetyl-L-glutamate + ATP = N-acetyl-L-glutamyl 5-phosphate + ADP. It functions in the pathway amino-acid biosynthesis; L-arginine biosynthesis; N(2)-acetyl-L-ornithine from L-glutamate: step 2/4. Catalyzes the ATP-dependent phosphorylation of N-acetyl-L-glutamate. The polypeptide is Acetylglutamate kinase (Rhodospirillum centenum (strain ATCC 51521 / SW)).